Consider the following 59-residue polypeptide: Putative potassium channel toxin Ts24 (59 aa).

Residues 1–22 (MKAFYGILIIFILISMIHLSQQ) form the signal peptide. 3 disulfide bridges follow: cysteine 29-cysteine 50, cysteine 35-cysteine 55, and cysteine 39-cysteine 57.

The protein belongs to the short scorpion toxin superfamily. Potassium channel inhibitor family. Alpha-KTx 04 subfamily. In terms of tissue distribution, expressed by the venom gland.

The protein localises to the secreted. Its function is as follows. Potently blocks Kv1.1/KCNA1 (85%), Kv1.2/KCNA2 (91%), Kv1.3/KCNA3 (89%), Kv1.6/KCNA6 (94%), and Shaker (97%). The polypeptide is Putative potassium channel toxin Ts24 (Tityus serrulatus (Brazilian scorpion)).